Consider the following 269-residue polypeptide: C-type lectin domain family 1 member A (269 aa).

Residues 1 to 51 (MQAKYSSTRDMLDDDDTTISLYSGTSTVTRRAEPRHSENGTPSSVWRPVAL) are Cytoplasmic-facing. The helical; Signal-anchor for type II membrane protein transmembrane segment at 52–72 (TLLTLCLVLLVGLAALGLVFF) threads the bilayer. Topologically, residues 73-269 (QFYQLSNIQQ…AGRVVPGELQ (197 aa)) are extracellular. N-linked (GlcNAc...) asparagine glycosylation is found at N94, N126, N168, and N202. The 115-residue stretch at 143–257 (YGDKCYQFYK…CKELRRCACE (115 aa)) folds into the C-type lectin domain. Disulfide bonds link C164/C256 and C235/C248.

It is found in the membrane. This Mus musculus (Mouse) protein is C-type lectin domain family 1 member A (Clec1a).